A 536-amino-acid polypeptide reads, in one-letter code: Subtilisin-like proteinase Spm1 (536 aa).

The signal sequence occupies residues 1 to 15 (MKSVILLSLAACAVA). Residues 16-147 (APTAGVETIH…RYEEVKKDEC (132 aa)) constitute a propeptide that is removed on maturation. The 94-residue stretch at 44–137 (YIIKFKKHVD…IERDTIVHTM (94 aa)) folds into the Inhibitor I9 domain. Positions 156-462 (PWGLSRVSHR…GGCSNYFEIV (307 aa)) constitute a Peptidase S8 domain. Catalysis depends on charge relay system residues aspartate 192 and histidine 224. Residues asparagine 254 and asparagine 294 are each glycosylated (N-linked (GlcNAc...) asparagine). The active-site Charge relay system is serine 390.

It belongs to the peptidase S8 family.

It is found in the vacuole. This Pyricularia oryzae (strain 70-15 / ATCC MYA-4617 / FGSC 8958) (Rice blast fungus) protein is Subtilisin-like proteinase Spm1 (SPM1).